The chain runs to 913 residues: DNA polymerase I (913 aa).

The region spanning 1–305 (MSQAPLVLVD…AGENGEAETP (305 aa)) is the 5'-3' exonuclease domain. The 3'-5' exonuclease domain maps to 306 to 501 (IQAEVDYDVV…LHQALWQKLE (196 aa)). The interval 505–913 (SLARVLTDIE…GVGSNWDEAH (409 aa)) is polymerase.

It belongs to the DNA polymerase type-A family. In terms of assembly, single-chain monomer with multiple functions.

The catalysed reaction is DNA(n) + a 2'-deoxyribonucleoside 5'-triphosphate = DNA(n+1) + diphosphate. In terms of biological role, in addition to polymerase activity, this DNA polymerase exhibits 3'-5' and 5'-3' exonuclease activity. In Pseudomonas aeruginosa (strain ATCC 15692 / DSM 22644 / CIP 104116 / JCM 14847 / LMG 12228 / 1C / PRS 101 / PAO1), this protein is DNA polymerase I (polA).